Reading from the N-terminus, the 267-residue chain is MNKPIGVIDSGVGGLTVAKEIMRQLPNETIYYLGDIARCPYGPRPGEEVKKFTTELAQKLMEFDIKMLVIACNTATAVALNYLQNILPIPVIGVIEPGARTAIMTTKNQNVLVLGTEGTIKSEAYRTHIKKINPNVNVYSVACPGFVPLVEQMRYKDPTITNIVIHQTLKQWRNSDADTVILGCTHYPLLYQPIYEYFSGTKTVISSGLETAREVSALLTFSNEHASYTEHPQHRFFATGDTTHIKNIIDEWLNMKVEVQRITVDDS.

Residues 9 to 10 and 41 to 42 each bind substrate; these read DS and YG. Cysteine 72 acts as the Proton donor/acceptor in catalysis. Substrate is bound at residue 73 to 74; sequence NT. Residue cysteine 184 is the Proton donor/acceptor of the active site. 185 to 186 contributes to the substrate binding site; that stretch reads TH.

Belongs to the aspartate/glutamate racemases family.

The catalysed reaction is L-glutamate = D-glutamate. Its pathway is cell wall biogenesis; peptidoglycan biosynthesis. Provides the (R)-glutamate required for cell wall biosynthesis. In Staphylococcus epidermidis (strain ATCC 12228 / FDA PCI 1200), this protein is Glutamate racemase.